A 122-amino-acid polypeptide reads, in one-letter code: Large ribosomal subunit protein eL31 (122 aa).

The protein belongs to the eukaryotic ribosomal protein eL31 family.

The chain is Large ribosomal subunit protein eL31 from Caenorhabditis elegans.